The chain runs to 499 residues: Putative DUF21 domain-containing protein At1g03270 (499 aa).

Residues 1–32 (MVVLSTLALVRAAYSLNSFVFEAEDIRFGSPW) lie on the Extracellular side of the membrane. Positions 29–211 (GSPWWFVVVG…GKGGELTHEE (183 aa)) constitute a CNNM transmembrane domain. The helical transmembrane segment at 33-53 (WFVVVGVACFLVLFAGIMSGL) threads the bilayer. Over 54-91 (TLGLMSLGLVELEILQQSGSSAEKKQAAAILPVVKKQH) the chain is Cytoplasmic. The chain crosses the membrane as a helical span at residues 92–112 (QLLVTLLLCNAAAMEALPICL). The Extracellular segment spans residues 113–114 (DK). Residues 115–135 (IFHPFVAVLLSVTFVLAFGEI) form a helical membrane-spanning segment. The Cytoplasmic segment spans residues 136 to 145 (IPQAICSRYG). The helical transmembrane segment at 146 to 166 (LAVGANFLWLVRILMIICYPI) threads the bilayer. Topologically, residues 167–499 (AYPIGKVLDA…TEPLLAESDR (333 aa)) are extracellular. Asn-181 is a glycosylation site (N-linked (GlcNAc...) asparagine). CBS domains are found at residues 230-291 (MTPI…EAPV), 295-359 (SIRK…SNLT), and 365-431 (HESH…IVDE). N-linked (GlcNAc...) asparagine glycans are attached at residues Asn-357, Asn-391, and Asn-484.

The protein resides in the membrane. This Arabidopsis thaliana (Mouse-ear cress) protein is Putative DUF21 domain-containing protein At1g03270 (CBSDUF4).